We begin with the raw amino-acid sequence, 48 residues long: Large ribosomal subunit protein bL36c (48 aa).

This sequence belongs to the bacterial ribosomal protein bL36 family.

The protein resides in the plastid. It is found in the chloroplast. The chain is Large ribosomal subunit protein bL36c from Rhodomonas salina (Cryptomonas salina).